Consider the following 271-residue polypeptide: S-adenosylmethionine decarboxylase proenzyme (271 aa).

Ser121 acts as the Schiff-base intermediate with substrate; via pyruvic acid in catalysis. Ser121 carries the pyruvic acid (Ser); by autocatalysis modification. Catalysis depends on His126, which acts as the Proton acceptor; for processing activity. The active-site Proton donor; for catalytic activity is the Cys149.

It belongs to the prokaryotic AdoMetDC family. Type 2 subfamily. Heterooctamer of four alpha and four beta chains arranged as a tetramer of alpha/beta heterodimers. It depends on pyruvate as a cofactor. Post-translationally, is synthesized initially as an inactive proenzyme. Formation of the active enzyme involves a self-maturation process in which the active site pyruvoyl group is generated from an internal serine residue via an autocatalytic post-translational modification. Two non-identical subunits are generated from the proenzyme in this reaction, and the pyruvate is formed at the N-terminus of the alpha chain, which is derived from the carboxyl end of the proenzyme. The post-translation cleavage follows an unusual pathway, termed non-hydrolytic serinolysis, in which the side chain hydroxyl group of the serine supplies its oxygen atom to form the C-terminus of the beta chain, while the remainder of the serine residue undergoes an oxidative deamination to produce ammonia and the pyruvoyl group blocking the N-terminus of the alpha chain.

The catalysed reaction is S-adenosyl-L-methionine + H(+) = S-adenosyl 3-(methylsulfanyl)propylamine + CO2. The protein operates within amine and polyamine biosynthesis; S-adenosylmethioninamine biosynthesis; S-adenosylmethioninamine from S-adenosyl-L-methionine: step 1/1. Its function is as follows. Catalyzes the decarboxylation of S-adenosylmethionine to S-adenosylmethioninamine (dcAdoMet), the propylamine donor required for the synthesis of the polyamines spermine and spermidine from the diamine putrescine. This Clostridium perfringens (strain ATCC 13124 / DSM 756 / JCM 1290 / NCIMB 6125 / NCTC 8237 / Type A) protein is S-adenosylmethionine decarboxylase proenzyme.